We begin with the raw amino-acid sequence, 379 residues long: Armadillo repeat-containing X-linked protein 3 (379 aa).

The Mitochondrial intermembrane portion of the chain corresponds to 1–6; that stretch reads MGYARK. 2 mitochondrion outer membrane (MOM)-targeting sequence regions span residues 1 to 6 and 26 to 37; these read MGYARK and RLTRGRKQNKEK. Residues 7-29 form a helical; Signal-anchor membrane-spanning segment; that stretch reads VGWVTAGLVIGAGACYCIYRLTR. At 30–379 the chain is on the cytoplasmic side; the sequence is GRKQNKEKMA…AEHMFPKSQE (350 aa). Phosphoserine occurs at positions 61, 67, and 72. A nuclear localization signal region spans residues 89–98; the sequence is RARARARARA. Phosphoserine is present on Ser-110. ARM repeat units lie at residues 111-151, 153-192, and 233-272; these read PNSD…NNAA, AFNR…NLSV, and VTNE…NLAE.

This sequence belongs to the eutherian X-chromosome-specific Armcx family. As to quaternary structure, interacts (via ARM domain) with MIRO1, MIRO2 and TRAK2. The interaction with Miro is calcium-dependent. Interacts with SOX10.

The protein localises to the mitochondrion outer membrane. The protein resides in the cytoplasm. It localises to the nucleus. In terms of biological role, regulates mitochondrial aggregation and transport in axons in living neurons. May link mitochondria to the TRAK2-kinesin motor complex via its interaction with Miro and TRAK2. Mitochondrial distribution and dynamics is regulated through ARMCX3 protein degradation, which is promoted by PCK and negatively regulated by WNT1. Enhances the SOX10-mediated transactivation of the neuronal acetylcholine receptor subunit alpha-3 and beta-4 subunit gene promoters. In Pongo abelii (Sumatran orangutan), this protein is Armadillo repeat-containing X-linked protein 3 (ARMCX3).